A 313-amino-acid polypeptide reads, in one-letter code: Formimidoylglutamase (313 aa).

Residues His-130, Asp-155, His-157, Asp-159, Asp-241, and Asp-243 each contribute to the Mn(2+) site.

It belongs to the arginase family. Requires Mn(2+) as cofactor.

The enzyme catalyses N-formimidoyl-L-glutamate + H2O = formamide + L-glutamate. It functions in the pathway amino-acid degradation; L-histidine degradation into L-glutamate; L-glutamate from N-formimidoyl-L-glutamate (hydrolase route): step 1/1. Its function is as follows. Catalyzes the conversion of N-formimidoyl-L-glutamate to L-glutamate and formamide. The sequence is that of Formimidoylglutamase from Salmonella newport (strain SL254).